A 480-amino-acid polypeptide reads, in one-letter code: RAC-alpha serine/threonine-protein kinase (480 aa).

One can recognise a PH domain in the interval 5 to 108 (AIVKEGWLHK…WATAIQTVAD (104 aa)). Residues Lys14 and Lys20 each carry the N6-acetyllysine modification. 14–19 (KRGEYI) contributes to the 1D-myo-inositol 1,3,4,5-tetrakisphosphate binding site. 1D-myo-inositol 1,3,4,5-tetrakisphosphate-binding positions include 23 to 25 (RPR) and Asn53. The cysteines at positions 60 and 77 are disulfide-linked. Arg86 is a binding site for 1D-myo-inositol 1,3,4,5-tetrakisphosphate. The segment at 114–137 (EEETMDFRSGSPSDNSGAEEMEVS) is disordered. Residue Ser124 is modified to Phosphoserine. Residues Ser126 and Ser129 each carry the phosphoserine; alternate modification. O-linked (GlcNAc) serine; alternate glycans are attached at residues Ser126 and Ser129. Positions 150–408 (FEYLKLLGKG…AKEIMQHRFF (259 aa)) constitute a Protein kinase domain. 156–164 (LGKGTFGKV) serves as a coordination point for ATP. Residue Tyr176 is modified to Phosphotyrosine; by TNK2. Lys179 is a binding site for ATP. Asp274 serves as the catalytic Proton acceptor. Lys284 is covalently cross-linked (Glycyl lysine isopeptide (Lys-Gly) (interchain with G-Cter in ubiquitin)). An intrachain disulfide couples Cys296 to Cys310. Thr305 carries O-linked (GlcNAc) threonine glycosylation. Thr308 is subject to Phosphothreonine; by IKKE, PDPK1 and TBK1. A glycan (O-linked (GlcNAc) threonine) is linked at Thr312. Residues 409–480 (ANIVWQDVYE…QFSYSASGTA (72 aa)) enclose the AGC-kinase C-terminal domain. Position 448 is a phosphothreonine (Thr448). Residue Thr450 is modified to Phosphothreonine; by MTOR. The interval 450–480 (TPPDQDDSMECVDSERRPHFPQFSYSASGTA) is disordered. Ser473 carries an O-linked (GlcNAc) serine; alternate glycan. Ser473 is subject to Phosphoserine; by IKKE, MTOR, PRKDC and TBK1; alternate. Position 474 is a phosphotyrosine (Tyr474). Ser477 bears the Phosphoserine; by CDK2 and MTOR mark. Residue Thr479 is modified to Phosphothreonine; by CDK2 and MTOR.

Belongs to the protein kinase superfamily. AGC Ser/Thr protein kinase family. RAC subfamily. Interacts with and phosphorylated by PDPK1. Interacts with AGAP2 (isoform 2/PIKE-A); the interaction occurs in the presence of guanine nucleotides. Interacts with AKTIP. Interacts (via PH domain) with MTCP1, TCL1A and TCL1B. Interacts with CDKN1B; the interaction phosphorylates CDKN1B promoting 14-3-3 binding and cell-cycle progression. Interacts with MAP3K5 and TRAF6. Interacts with BAD, PPP2R5B, STK3 and STK4. Interacts (via PH domain) with SIRT1. Interacts with SRPK2 in a phosphorylation-dependent manner. Interacts with TRIM13; the interaction ubiquitinates AKT1 leading to its proteasomal degradation. Interacts with RAF1. Interacts (via the C-terminus) with CCDC88A (via its C-terminus) and THEM4 (via its C-terminus). Interacts with GRB10; the interaction leads to GRB10 phosphorylation thus promoting YWHAE-binding. Interacts with KCTD20. Interacts with BTBD10. Interacts with PA2G4. Interacts with KIF14; the interaction is detected in the plasma membrane upon INS stimulation and promotes AKT1 phosphorylation. Interacts with FAM83B; activates the PI3K/AKT signaling cascade. Interacts with WDFY2 (via WD repeats 1-3). Forms a complex with WDFY2 and FOXO1. Interacts with FAM168A. Interacts with SYAP1 (via phosphorylated form and BSD domain); this interaction is enhanced in a mTORC2-mediated manner in response to epidermal growth factor (EGF) stimulation and activates AKT1. Interacts with PKHM3. Interacts with FKBP5/FKBP51; promoting interaction between Akt/AKT1 and PHLPP1, thereby enhancing dephosphorylation and subsequent activation of Akt/AKT1. Interacts with TMEM175; leading to formation of the lysoK(GF) complex. Post-translationally, O-GlcNAcylation at Thr-305 and Thr-312 inhibits activating phosphorylation at Thr-308 via disrupting the interaction between AKT1 and PDPK1. O-GlcNAcylation at Ser-473 also probably interferes with phosphorylation at this site. In terms of processing, phosphorylation on Thr-308, Ser-473 and Tyr-474 is required for full activity. Phosphorylation of the activation loop at Thr-308 by PDPK1/PDK1 is a prerequisite for full activation. Phosphorylation by mTORC2 in response to growth factors plays a key role in AKT1 activation: mTORC2 phosphorylates different sites depending on the context, such as Thr-450, Ser-473, Ser-477 or Thr-479, thereby facilitating subsequent phosphorylation of the activation loop by PDPK1/PDK1. Phosphorylation at Ser-473 by mTORC2 promotes ubiquitination and degradation by the proteasome. Also phosphorylated at Ser-477 and Thr-479 by CDK2, facilitating subsequent phosphorylation of the activation loop by PDPK1/PDK1. Activated TNK2 phosphorylates it on Tyr-176 resulting in its binding to the anionic plasma membrane phospholipid PA. This phosphorylated form localizes to the cell membrane, where it is targeted by PDPK1 and PDPK2 for further phosphorylations on Thr-308 and Ser-473 leading to its activation. Phosphorylated at Thr-308 and Ser-473 by IKBKE and TBK1. Ser-473 phosphorylation is enhanced by interaction with AGAP2 isoform 2 (PIKE-A). Ser-473 phosphorylation is enhanced by signaling through activated FLT3. Ser-473 is dephosphorylated by PHLPP. Dephosphorylated at Thr-308 and Ser-473 by PP2A phosphatase. The phosphorylated form of PPP2R5B is required for bridging AKT1 with PP2A phosphatase. Ser-473 is dephosphorylated by CPPED1, leading to termination of signaling. AIM2 acts as an inhibitor of AKT1 by inhibiting phosphorylation Ser-473: AIM2 acts both by inhibiting the activity of PRKDC/DNA-PK kinase and promoting dephosphorylation by PP2A phosphatase. Ubiquitinated; undergoes both 'Lys-48'- and 'Lys-63'-linked polyubiquitination. TRAF6-induced 'Lys-63'-linked AKT1 ubiquitination is critical for phosphorylation and activation. When ubiquitinated, it translocates to the plasma membrane, where it becomes phosphorylated. When fully phosphorylated and translocated into the nucleus, undergoes 'Lys-48'-polyubiquitination catalyzed by TTC3, leading to its degradation by the proteasome. Also ubiquitinated by TRIM13 leading to its proteasomal degradation. Ubiquitinated via 'Lys-48'-linked polyubiquitination by ZNRF1, leading to its degradation by the proteasome. Phosphorylated, undergoes 'Lys-48'-linked polyubiquitination preferentially at Lys-284 catalyzed by MUL1, leading to its proteasomal degradation. Post-translationally, acetylated on Lys-14 and Lys-20 by the histone acetyltransferases EP300 and KAT2B. Acetylation results in reduced phosphorylation and inhibition of activity. Deacetylated at Lys-14 and Lys-20 by SIRT1. SIRT1-mediated deacetylation relieves the inhibition. In terms of processing, cleavage by caspase-3/CASP3. Cleaved at the caspase-3 consensus site Asp-462 during apoptosis, resulting in down-regulation of the AKT signaling pathway and decreased cell survival. In terms of tissue distribution, widely expressed. Low levels found in liver with slightly higher levels present in thymus and testis.

Its subcellular location is the cytoplasm. It localises to the nucleus. The protein localises to the cell membrane. The protein resides in the mitochondrion intermembrane space. It carries out the reaction L-seryl-[protein] + ATP = O-phospho-L-seryl-[protein] + ADP + H(+). It catalyses the reaction L-threonyl-[protein] + ATP = O-phospho-L-threonyl-[protein] + ADP + H(+). Its activity is regulated as follows. Three specific sites, one in the kinase domain (Thr-308) and the two other ones in the C-terminal regulatory region (Ser-473 and Tyr-474), need to be phosphorylated for its full activation. Its function is as follows. AKT1 is one of 3 closely related serine/threonine-protein kinases (AKT1, AKT2 and AKT3) called the AKT kinase, and which regulate many processes including metabolism, proliferation, cell survival, growth and angiogenesis. This is mediated through serine and/or threonine phosphorylation of a range of downstream substrates. Over 100 substrate candidates have been reported so far, but for most of them, no isoform specificity has been reported. AKT is responsible of the regulation of glucose uptake by mediating insulin-induced translocation of the SLC2A4/GLUT4 glucose transporter to the cell surface. Phosphorylation of PTPN1 at 'Ser-50' negatively modulates its phosphatase activity preventing dephosphorylation of the insulin receptor and the attenuation of insulin signaling. Phosphorylation of TBC1D4 triggers the binding of this effector to inhibitory 14-3-3 proteins, which is required for insulin-stimulated glucose transport. AKT also regulates the storage of glucose in the form of glycogen by phosphorylating GSK3A at 'Ser-21' and GSK3B at 'Ser-9', resulting in inhibition of its kinase activity. Phosphorylation of GSK3 isoforms by AKT is also thought to be one mechanism by which cell proliferation is driven. AKT also regulates cell survival via the phosphorylation of MAP3K5 (apoptosis signal-related kinase). Phosphorylation of 'Ser-83' decreases MAP3K5 kinase activity stimulated by oxidative stress and thereby prevents apoptosis. AKT mediates insulin-stimulated protein synthesis by phosphorylating TSC2 at 'Ser-939' and 'Thr-1462', thereby activating the mTORC1 signaling pathway, and leading to both phosphorylation of 4E-BP1 and in activation of RPS6KB1. Also regulates the mTORC1 signaling pathway by catalyzing phosphorylation of CASTOR1 and DEPDC5. AKT plays a role as key modulator of the AKT-mTOR signaling pathway controlling the tempo of the process of newborn neurons integration during adult neurogenesis, including correct neuron positioning, dendritic development and synapse formation. Part of a positive feedback loop of mTORC2 signaling by mediating phosphorylation of MAPKAP1/SIN1, promoting mTORC2 activation. AKT is involved in the phosphorylation of members of the FOXO factors (Forkhead family of transcription factors), leading to binding of 14-3-3 proteins and cytoplasmic localization. In particular, FOXO1 is phosphorylated at 'Thr-24', 'Ser-256' and 'Ser-319'. FOXO3 and FOXO4 are phosphorylated on equivalent sites. AKT has an important role in the regulation of NF-kappa-B-dependent gene transcription and positively regulates the activity of CREB1 (cyclic AMP (cAMP)-response element binding protein). The phosphorylation of CREB1 induces the binding of accessory proteins that are necessary for the transcription of pro-survival genes such as BCL2 and MCL1. AKT phosphorylates 'Ser-454' on ATP citrate lyase (ACLY), thereby potentially regulating ACLY activity and fatty acid synthesis. Activates the 3B isoform of cyclic nucleotide phosphodiesterase (PDE3B) via phosphorylation of 'Ser-273', resulting in reduced cyclic AMP levels and inhibition of lipolysis. Phosphorylates PIKFYVE on 'Ser-318', which results in increased PI(3)P-5 activity. The Rho GTPase-activating protein DLC1 is another substrate and its phosphorylation is implicated in the regulation cell proliferation and cell growth. Signals downstream of phosphatidylinositol 3-kinase (PI(3)K) to mediate the effects of various growth factors such as platelet-derived growth factor (PDGF), epidermal growth factor (EGF), insulin and insulin-like growth factor 1 (IGF1). AKT mediates the antiapoptotic effects of IGF1. Essential for the SPATA13-mediated regulation of cell migration and adhesion assembly and disassembly. May be involved in the regulation of the placental development. Phosphorylates STK4/MST1 at 'Thr-120' and 'Thr-387' leading to inhibition of its: kinase activity, nuclear translocation, autophosphorylation and ability to phosphorylate FOXO3. Phosphorylates STK3/MST2 at 'Thr-117' and 'Thr-384' leading to inhibition of its: cleavage, kinase activity, autophosphorylation at Thr-180, binding to RASSF1 and nuclear translocation. Phosphorylates SRPK2 and enhances its kinase activity towards SRSF2 and ACIN1 and promotes its nuclear translocation. Phosphorylates RAF1 at 'Ser-259' and negatively regulates its activity. Phosphorylation of BAD stimulates its pro-apoptotic activity. Phosphorylates KAT6A at 'Thr-369' and this phosphorylation inhibits the interaction of KAT6A with PML and negatively regulates its acetylation activity towards p53/TP53. Phosphorylates palladin (PALLD), modulating cytoskeletal organization and cell motility. Phosphorylates prohibitin (PHB), playing an important role in cell metabolism and proliferation. Phosphorylates CDKN1A, for which phosphorylation at 'Thr-145' induces its release from CDK2 and cytoplasmic relocalization. These recent findings indicate that the AKT1 isoform has a more specific role in cell motility and proliferation. Phosphorylates CLK2 thereby controlling cell survival to ionizing radiation. Phosphorylates PCK1 at 'Ser-90', reducing the binding affinity of PCK1 to oxaloacetate and changing PCK1 into an atypical protein kinase activity using GTP as donor. Also acts as an activator of TMEM175 potassium channel activity in response to growth factors: forms the lysoK(GF) complex together with TMEM175 and acts by promoting TMEM175 channel activation, independently of its protein kinase activity. Acts as a negative regulator of the cGAS-STING pathway by mediating phosphorylation of CGAS during mitosis, leading to its inhibition. Acts as a regulator of mitochondrial calcium uptake by mediating phosphorylation of MICU1 in the mitochondrial intermembrane space, impairing MICU1 maturation. Acts as an inhibitor of tRNA methylation by mediating phosphorylation of the N-terminus of METTL1, thereby inhibiting METTL1 methyltransferase activity. In response to LPAR1 receptor pathway activation, phosphorylates Rabin8/RAB3IP which alters its activity and phosphorylates WDR44 which induces WDR44 binding to Rab11, thereby switching Rab11 vesicular function from preciliary trafficking to endocytic recycling. This is RAC-alpha serine/threonine-protein kinase (Akt1) from Mus musculus (Mouse).